Consider the following 923-residue polypeptide: Protein translocase subunit SecA (923 aa).

ATP-binding positions include glutamine 86, 104–108, and aspartate 512; that span reads GEGKT. The Zn(2+) site is built by cysteine 906, cysteine 908, cysteine 917, and histidine 918.

Belongs to the SecA family. As to quaternary structure, monomer and homodimer. Part of the essential Sec protein translocation apparatus which comprises SecA, SecYEG and auxiliary proteins SecDF-YajC and YidC. Zn(2+) is required as a cofactor.

Its subcellular location is the cell inner membrane. The protein resides in the cytoplasm. It catalyses the reaction ATP + H2O + cellular proteinSide 1 = ADP + phosphate + cellular proteinSide 2.. Its function is as follows. Part of the Sec protein translocase complex. Interacts with the SecYEG preprotein conducting channel. Has a central role in coupling the hydrolysis of ATP to the transfer of proteins into and across the cell membrane, serving both as a receptor for the preprotein-SecB complex and as an ATP-driven molecular motor driving the stepwise translocation of polypeptide chains across the membrane. This chain is Protein translocase subunit SecA, found in Caulobacter vibrioides (strain ATCC 19089 / CIP 103742 / CB 15) (Caulobacter crescentus).